Reading from the N-terminus, the 475-residue chain is Erythroid membrane-associated protein (475 aa).

The N-terminal stretch at Met1–Gly29 is a signal peptide. The region spanning His30–Ile140 is the Ig-like V-type domain. Topologically, residues His30–Ala155 are extracellular. Cys50 and Cys126 form a disulfide bridge. An N-linked (GlcNAc...) asparagine glycan is attached at Asn132. A helical transmembrane segment spans residues Val156–Ile176. The Cytoplasmic portion of the chain corresponds to Trp177–Phe475. Residues Lys220–Ser418 form the B30.2/SPRY domain. Position 418 is a phosphoserine (Ser418).

It belongs to the immunoglobulin superfamily. BTN/MOG family. Post-translationally, glycosylated. As to expression, expressed in erythroid-enriched bone marrow (at protein level). Highly expressed in bone marrow and to a lower extent in leukocytes, thymus, lymph node and spleen.

The protein localises to the cell membrane. The protein resides in the cytoplasm. Its function is as follows. Possible role as a cell-adhesion or receptor molecule of erythroid cells. The protein is Erythroid membrane-associated protein (ERMAP) of Homo sapiens (Human).